We begin with the raw amino-acid sequence, 917 residues long: MSNEYPYASMRDSFDLSAYFVVGPEDCKGRPLTDVVDQALHGGATFIQLRAKEADASELTDMARDIAQIIEDNEKSDSVAFVIDDRADVVWQARRKGIKVDGVHIGQTDMEPREARALLGDEAIVGLSAETESLVRLINELPDGCIDYIGAGPLHVSTTKPEASVGGNDGSGKTLDAAQINTICVASEFPVVVGGGVTAADMAMLADTKAAGWFVVSAIAGAENPEEAARTMVEGWKAVRGDKKHGYAPRVVTHTPATDTQAAQEGAAKPGSEATEKKFTNAKDAKDAQKLAKQQRVDIAARGSKQRDKAHIRKTKSVPFTYQYGSYDLEVPYTEIKLSDTPGVGPNPPFHDYNTEGPKCDPKEGLKPLRLDWIRDRGDIEDYEGRRRNLEDDGKRAIKRGRATKEWRGRKHEPMRAKDHPITQMWYARHGIITPEMQYVATRENCDVELVRSELAAGRAVMPCNINHPEAEPMIIGSAFLTKLNANMGNSAVTSSIDEEVEKLTWATKWGADTVMDLSTGNDIHTTREWILRNSPVPIGTVPMYQALEKVEDDASKLSWELFRDTVIEQCEQGVDYMTIHAGVLLRYVPLTANRVTGIVSRGGSIMADWCLRHHQESFLYTHFDELCDIFAKYDVAFSLGDGLRPGSLADANDAAQLSELMTLGELTERAWAKDVQVMIEGPGHVPFDTVRMNIELEKAVCHNAPFYTLGPLTTDTAPGYDHITSAIGATEIGRYGTAMLCYVTPKEHLGLPNKDDVKQGVIAYKIACHAADIAKHHPHAMDRDNAISKARFEFRWLDQFNLSYDPDTAIAFHDDTLPAEPAKMAHFCSMCGPKFCSMAISQNIRKAFGGEAAQQQIVKEAAAGIDSEALATAKANVDNGVVSANVLSPEEILAGMDAMSEKYTAQGGKLYSTAQE.

Residues 1–243 form a thiamine-phosphate synthase region; the sequence is MSNEYPYASM…EGWKAVRGDK (243 aa). Residues 48-52 and D84 contribute to the 4-amino-2-methyl-5-(diphosphooxymethyl)pyrimidine site; that span reads QLRAK. Residues D85 and D109 each coordinate Mg(2+). S128 serves as a coordination point for 4-amino-2-methyl-5-(diphosphooxymethyl)pyrimidine. 157–159 is a 2-[(2R,5Z)-2-carboxy-4-methylthiazol-5(2H)-ylidene]ethyl phosphate binding site; the sequence is STT. A 4-amino-2-methyl-5-(diphosphooxymethyl)pyrimidine-binding site is contributed by K160. 2-[(2R,5Z)-2-carboxy-4-methylthiazol-5(2H)-ylidene]ethyl phosphate contacts are provided by residues G196 and 216–217; that span reads VS. The tract at residues 256-311 is disordered; it reads PATDTQAAQEGAAKPGSEATEKKFTNAKDAKDAQKLAKQQRVDIAARGSKQRDKAH. The interval 271-917 is phosphomethylpyrimidine synthase; sequence GSEATEKKFT…GGKLYSTAQE (647 aa). Basic and acidic residues predominate over residues 274 to 290; it reads ATEKKFTNAKDAKDAQK. Residues N487, M516, Y545, H581, 601–603, 642–645, and E681 each bind 5-amino-1-(5-phospho-beta-D-ribosyl)imidazole; these read SRG and DGLR. A Zn(2+)-binding site is contributed by H685. A 5-amino-1-(5-phospho-beta-D-ribosyl)imidazole-binding site is contributed by Y708. H749 contacts Zn(2+). Residues C829, C832, and C837 each contribute to the [4Fe-4S] cluster site.

In the N-terminal section; belongs to the thiamine-phosphate synthase family. It in the C-terminal section; belongs to the ThiC family. [4Fe-4S] cluster serves as cofactor.

The enzyme catalyses 2-[(2R,5Z)-2-carboxy-4-methylthiazol-5(2H)-ylidene]ethyl phosphate + 4-amino-2-methyl-5-(diphosphooxymethyl)pyrimidine + 2 H(+) = thiamine phosphate + CO2 + diphosphate. It carries out the reaction 2-(2-carboxy-4-methylthiazol-5-yl)ethyl phosphate + 4-amino-2-methyl-5-(diphosphooxymethyl)pyrimidine + 2 H(+) = thiamine phosphate + CO2 + diphosphate. The catalysed reaction is 4-methyl-5-(2-phosphooxyethyl)-thiazole + 4-amino-2-methyl-5-(diphosphooxymethyl)pyrimidine + H(+) = thiamine phosphate + diphosphate. It catalyses the reaction 5-amino-1-(5-phospho-beta-D-ribosyl)imidazole + S-adenosyl-L-methionine = 4-amino-2-methyl-5-(phosphooxymethyl)pyrimidine + CO + 5'-deoxyadenosine + formate + L-methionine + 3 H(+). Its pathway is cofactor biosynthesis; thiamine diphosphate biosynthesis; thiamine phosphate from 4-amino-2-methyl-5-diphosphomethylpyrimidine and 4-methyl-5-(2-phosphoethyl)-thiazole: step 1/1. Condenses 4-methyl-5-(beta-hydroxyethyl)thiazole monophosphate (THZ-P) and 2-methyl-4-amino-5-hydroxymethyl pyrimidine pyrophosphate (HMP-PP) to form thiamine monophosphate (TMP). Its function is as follows. Catalyzes the synthesis of the hydroxymethylpyrimidine phosphate (HMP-P) moiety of thiamine from aminoimidazole ribotide (AIR) in a radical S-adenosyl-L-methionine (SAM)-dependent reaction. The polypeptide is Thiamine biosynthesis bifunctional protein ThiEC (thiE/thiC) (Bifidobacterium longum (strain NCC 2705)).